A 370-amino-acid polypeptide reads, in one-letter code: Cysteine synthase 1 (370 aa).

A mitochondrion-targeting transit peptide spans Met-1–Ser-16. Lys-73 is subject to N6-(pyridoxal phosphate)lysine. Residues Asn-103, Gly-209–Thr-213, and Ser-308 each bind pyridoxal 5'-phosphate.

This sequence belongs to the cysteine synthase/cystathionine beta-synthase family. Pyridoxal 5'-phosphate is required as a cofactor.

The protein resides in the mitochondrion. It carries out the reaction O-succinyl-L-serine + hydrogen sulfide = L-cysteine + succinate. The catalysed reaction is O-acetyl-L-serine + hydrogen sulfide = L-cysteine + acetate. The protein operates within amino-acid biosynthesis; L-cysteine biosynthesis; L-cysteine from L-serine: step 2/2. In terms of biological role, catalyzes the conversion of O-succinyl-L-serine into cysteine, the last step in the cysteine biosynthesis pathway. Can also use O-acetyl-L-serine. The chain is Cysteine synthase 1 from Emericella nidulans (strain FGSC A4 / ATCC 38163 / CBS 112.46 / NRRL 194 / M139) (Aspergillus nidulans).